Reading from the N-terminus, the 222-residue chain is NADH dehydrogenase [ubiquinone] iron-sulfur protein 8-A, mitochondrial (222 aa).

4Fe-4S ferredoxin-type domains follow at residues 114 to 143 and 153 to 182; these read RRYP…IEAE and TRYD…EGPN. [4Fe-4S] cluster-binding residues include C123, C126, C129, C133, C162, C165, C168, and C172.

Belongs to the complex I 23 kDa subunit family. Complex I is composed of at least 49 different subunits. This is a component of the iron-sulfur (IP) fragment of the enzyme. Requires [4Fe-4S] cluster as cofactor.

The protein localises to the mitochondrion. It catalyses the reaction a ubiquinone + NADH + 5 H(+)(in) = a ubiquinol + NAD(+) + 4 H(+)(out). Its function is as follows. Core subunit of the mitochondrial membrane respiratory chain NADH dehydrogenase (Complex I) that is believed to belong to the minimal assembly required for catalysis. Complex I functions in the transfer of electrons from NADH to the respiratory chain. The immediate electron acceptor for the enzyme is believed to be ubiquinone. May donate electrons to ubiquinone. The protein is NADH dehydrogenase [ubiquinone] iron-sulfur protein 8-A, mitochondrial of Arabidopsis thaliana (Mouse-ear cress).